The chain runs to 195 residues: Peptidyl-tRNA hydrolase (195 aa).

Tyrosine 18 provides a ligand contact to tRNA. The active-site Proton acceptor is the histidine 23. Phenylalanine 69, asparagine 71, and asparagine 117 together coordinate tRNA.

Belongs to the PTH family. Monomer.

The protein localises to the cytoplasm. The enzyme catalyses an N-acyl-L-alpha-aminoacyl-tRNA + H2O = an N-acyl-L-amino acid + a tRNA + H(+). Hydrolyzes ribosome-free peptidyl-tRNAs (with 1 or more amino acids incorporated), which drop off the ribosome during protein synthesis, or as a result of ribosome stalling. Its function is as follows. Catalyzes the release of premature peptidyl moieties from peptidyl-tRNA molecules trapped in stalled 50S ribosomal subunits, and thus maintains levels of free tRNAs and 50S ribosomes. The protein is Peptidyl-tRNA hydrolase of Hahella chejuensis (strain KCTC 2396).